Consider the following 200-residue polypeptide: Protein DMP7 (200 aa).

The next 4 membrane-spanning stretches (helical) occupy residues 37–57, 69–89, 129–149, and 167–187; these read LSNLLPTGSVMSFQIMCPVLT, WLTCFLVSLCAISCFLFSFTD, ILDFIHAIMSMLVFFAVSMFD, and ILTSLPFVIGVICGAFFLAFP.

Belongs to the plant DMP1 protein family. In terms of tissue distribution, expressed in leaves, stems, flowers, siliques and roots, especially in the vasculature.

It localises to the endoplasmic reticulum membrane. In terms of biological role, involved in membrane remodeling. This Arabidopsis thaliana (Mouse-ear cress) protein is Protein DMP7.